The primary structure comprises 296 residues: MMFKQYLQVTKPGIIFGNLISVIGGFLLASKGSIDYPLFIYTLVGVSLVVASGCVFNNYIDRDIDRKMERTKNRVLVKGLISPGVSLVYATLLGIAGFMLLWFGANPLACWLGVMGFVVYVGVYSLYMKRHSVYGTLIGSLSGAAPPVIGYCAVTGDFDSGAAILLAIFSLWQMPHSYAIAIFRFKDYQAANIPVLPVIKGISVAKNHITLYIIAFAVATLMLTLGGYAGYKYLVVAAAVSVWWLGMALRGYKVEDDKVWARKLFGFSIIAITALSIMMSVDFMVPNSQNLLTYVW.

Residues 1–9 (MMFKQYLQV) lie on the Cytoplasmic side of the membrane. Residues 10–28 (TKPGIIFGNLISVIGGFLL) traverse the membrane as a helical segment. At 29-37 (ASKGSIDYP) the chain is on the periplasmic side. Residues 38-56 (LFIYTLVGVSLVVASGCVF) traverse the membrane as a helical segment. Residues 57–78 (NNYIDRDIDRKMERTKNRVLVK) are Cytoplasmic-facing. Residues 79–97 (GLISPGVSLVYATLLGIAG) traverse the membrane as a helical segment. Residues 98–107 (FMLLWFGANP) are Periplasmic-facing. A helical transmembrane segment spans residues 108–126 (LACWLGVMGFVVYVGVYSL). Residues 127 to 197 (YMKRHSVYGT…YQAANIPVLP (71 aa)) are Cytoplasmic-facing. A helical membrane pass occupies residues 198-216 (VIKGISVAKNHITLYIIAF). At 217 to 228 (AVATLMLTLGGY) the chain is on the periplasmic side. Residues 229–247 (AGYKYLVVAAAVSVWWLGM) form a helical membrane-spanning segment. The Cytoplasmic segment spans residues 248–268 (ALRGYKVEDDKVWARKLFGFS). The helical transmembrane segment at 269–287 (IIAITALSIMMSVDFMVPN) threads the bilayer. The Periplasmic portion of the chain corresponds to 288-296 (SQNLLTYVW).

Belongs to the UbiA prenyltransferase family. Protoheme IX farnesyltransferase subfamily.

It is found in the cell inner membrane. It catalyses the reaction heme b + (2E,6E)-farnesyl diphosphate + H2O = Fe(II)-heme o + diphosphate. Its pathway is porphyrin-containing compound metabolism; heme O biosynthesis; heme O from protoheme: step 1/1. Converts heme B (protoheme IX) to heme O by substitution of the vinyl group on carbon 2 of heme B porphyrin ring with a hydroxyethyl farnesyl side group. This is Protoheme IX farnesyltransferase from Salmonella typhi.